The following is a 275-amino-acid chain: Large ribosomal subunit protein uL2 (275 aa).

Positions 222 to 275 are disordered; it reads GVAMNPVDHPMGGGEGRSSGGRHPCSPWGMPTKGYKTRKNKTTDKFIVRKRNKR.

This sequence belongs to the universal ribosomal protein uL2 family. As to quaternary structure, part of the 50S ribosomal subunit. Forms a bridge to the 30S subunit in the 70S ribosome.

In terms of biological role, one of the primary rRNA binding proteins. Required for association of the 30S and 50S subunits to form the 70S ribosome, for tRNA binding and peptide bond formation. It has been suggested to have peptidyltransferase activity; this is somewhat controversial. Makes several contacts with the 16S rRNA in the 70S ribosome. This Desulfatibacillum aliphaticivorans protein is Large ribosomal subunit protein uL2.